Reading from the N-terminus, the 124-residue chain is Ubiquinol-cytochrome-c reductase complex assembly factor 2 (124 aa).

The transit peptide at 1–13 (MASLRYRRFLKLC) directs the protein to the mitochondrion.

The protein resides in the mitochondrion matrix. It is found in the mitochondrion nucleoid. The protein localises to the mitochondrion. Required for the assembly of the ubiquinol-cytochrome c reductase complex (mitochondrial respiratory chain complex III or cytochrome b-c1 complex). May play a role in the modulation of respiratory chain activities such as oxygen consumption and ATP production. May be involved in cytochrome b translation and/or stability. This Xenopus tropicalis (Western clawed frog) protein is Ubiquinol-cytochrome-c reductase complex assembly factor 2 (uqcc2).